Here is a 1357-residue protein sequence, read N- to C-terminus: DNA-directed RNA polymerase subunit beta (1357 aa).

Belongs to the RNA polymerase beta chain family. In terms of assembly, the RNAP catalytic core consists of 2 alpha, 1 beta, 1 beta' and 1 omega subunit. When a sigma factor is associated with the core the holoenzyme is formed, which can initiate transcription.

The enzyme catalyses RNA(n) + a ribonucleoside 5'-triphosphate = RNA(n+1) + diphosphate. Functionally, DNA-dependent RNA polymerase catalyzes the transcription of DNA into RNA using the four ribonucleoside triphosphates as substrates. This Nitrosomonas europaea (strain ATCC 19718 / CIP 103999 / KCTC 2705 / NBRC 14298) protein is DNA-directed RNA polymerase subunit beta.